The sequence spans 120 residues: Large ribosomal subunit protein bL20c (120 aa).

This sequence belongs to the bacterial ribosomal protein bL20 family.

Its subcellular location is the plastid. Its function is as follows. Binds directly to 23S ribosomal RNA and is necessary for the in vitro assembly process of the 50S ribosomal subunit. It is not involved in the protein synthesizing functions of that subunit. The protein is Large ribosomal subunit protein bL20c of Cuscuta obtusiflora (Peruvian dodder).